Here is a 357-residue protein sequence, read N- to C-terminus: DNA primase small subunit PriS (357 aa).

Residues Asp105, Asp107, and Asp259 contribute to the active site.

This sequence belongs to the eukaryotic-type primase small subunit family. Heterodimer of a small subunit (PriS) and a large subunit (PriL). Mg(2+) serves as cofactor. The cofactor is Mn(2+).

In terms of biological role, catalytic subunit of DNA primase, an RNA polymerase that catalyzes the synthesis of short RNA molecules used as primers for DNA polymerase during DNA replication. The small subunit contains the primase catalytic core and has DNA synthesis activity on its own. Binding to the large subunit stabilizes and modulates the activity, increasing the rate of DNA synthesis while decreasing the length of the DNA fragments, and conferring RNA synthesis capability. The DNA polymerase activity may enable DNA primase to also catalyze primer extension after primer synthesis. May also play a role in DNA repair. This is DNA primase small subunit PriS from Methanococcus maripaludis (strain C6 / ATCC BAA-1332).